The following is an 891-amino-acid chain: uncharacterized protein (891 aa).

Residues G48–K64 are compositionally biased toward basic and acidic residues. Residues G48–K86 form a disordered region. Phosphoserine occurs at positions 261, 263, 265, and 268. Positions Q795–S822 are disordered. Residues F810–S822 show a composition bias toward polar residues.

The protein localises to the nucleus. This is an uncharacterized protein from Schizosaccharomyces pombe (strain 972 / ATCC 24843) (Fission yeast).